Reading from the N-terminus, the 429-residue chain is Enolase (429 aa).

Residue Gln163 coordinates (2R)-2-phosphoglycerate. Glu205 serves as the catalytic Proton donor. Residues Asp242, Glu285, and Asp312 each contribute to the Mg(2+) site. (2R)-2-phosphoglycerate is bound by residues Lys337, Arg366, Ser367, and Lys388. Lys337 acts as the Proton acceptor in catalysis.

It belongs to the enolase family. Mg(2+) is required as a cofactor.

The protein localises to the cytoplasm. It localises to the secreted. Its subcellular location is the cell surface. The enzyme catalyses (2R)-2-phosphoglycerate = phosphoenolpyruvate + H2O. It participates in carbohydrate degradation; glycolysis; pyruvate from D-glyceraldehyde 3-phosphate: step 4/5. Catalyzes the reversible conversion of 2-phosphoglycerate (2-PG) into phosphoenolpyruvate (PEP). It is essential for the degradation of carbohydrates via glycolysis. The protein is Enolase of Methylorubrum extorquens (strain PA1) (Methylobacterium extorquens).